A 650-amino-acid polypeptide reads, in one-letter code: 1-deoxy-D-xylulose-5-phosphate synthase (650 aa).

Thiamine diphosphate-binding positions include histidine 73 and 113-115 (SHA). Mg(2+) is bound at residue aspartate 145. Residues 146–147 (GA), asparagine 175, tyrosine 287, and glutamate 369 contribute to the thiamine diphosphate site. Asparagine 175 provides a ligand contact to Mg(2+). Residues 629–650 (SARPLPEDAERVPMRAEDDEQA) form a disordered region. Positions 633 to 644 (LPEDAERVPMRA) are enriched in basic and acidic residues.

It belongs to the transketolase family. DXPS subfamily. Homodimer. Requires Mg(2+) as cofactor. Thiamine diphosphate is required as a cofactor.

It catalyses the reaction D-glyceraldehyde 3-phosphate + pyruvate + H(+) = 1-deoxy-D-xylulose 5-phosphate + CO2. The protein operates within metabolic intermediate biosynthesis; 1-deoxy-D-xylulose 5-phosphate biosynthesis; 1-deoxy-D-xylulose 5-phosphate from D-glyceraldehyde 3-phosphate and pyruvate: step 1/1. Its function is as follows. Catalyzes the acyloin condensation reaction between C atoms 2 and 3 of pyruvate and glyceraldehyde 3-phosphate to yield 1-deoxy-D-xylulose-5-phosphate (DXP). This is 1-deoxy-D-xylulose-5-phosphate synthase from Clavibacter sepedonicus (Clavibacter michiganensis subsp. sepedonicus).